We begin with the raw amino-acid sequence, 130 residues long: Small ribosomal subunit protein uS9 (130 aa).

A disordered region spans residues 98–130 (LKRAGLLTRDPRMKERKKPGLKKARRSPQFSKR). The segment covering 111 to 130 (KERKKPGLKKARRSPQFSKR) has biased composition (basic residues).

It belongs to the universal ribosomal protein uS9 family.

This chain is Small ribosomal subunit protein uS9 (rpsI), found in Staphylococcus carnosus (strain TM300).